The following is a 256-amino-acid chain: Protein FixA (256 aa).

It belongs to the ETF beta-subunit/FixA family. As to quaternary structure, heterodimer of FixA and FixB.

The protein operates within amine and polyamine metabolism; carnitine metabolism. Required for anaerobic carnitine reduction. May bring reductant to CaiA. The sequence is that of Protein FixA from Escherichia fergusonii (strain ATCC 35469 / DSM 13698 / CCUG 18766 / IAM 14443 / JCM 21226 / LMG 7866 / NBRC 102419 / NCTC 12128 / CDC 0568-73).